The chain runs to 382 residues: 1-deoxy-D-xylulose 5-phosphate reductoisomerase (382 aa).

NADPH contacts are provided by T10, G11, S12, I13, G36, and N122. K123 serves as a coordination point for 1-deoxy-D-xylulose 5-phosphate. Residue E124 coordinates NADPH. D148 lines the Mn(2+) pocket. Residues S149, E150, S174, and H197 each coordinate 1-deoxy-D-xylulose 5-phosphate. E150 is a Mn(2+) binding site. G203 provides a ligand contact to NADPH. Residues S210, N215, K216, and E219 each contribute to the 1-deoxy-D-xylulose 5-phosphate site. E219 serves as a coordination point for Mn(2+).

Belongs to the DXR family. Mg(2+) is required as a cofactor. It depends on Mn(2+) as a cofactor.

It catalyses the reaction 2-C-methyl-D-erythritol 4-phosphate + NADP(+) = 1-deoxy-D-xylulose 5-phosphate + NADPH + H(+). The protein operates within isoprenoid biosynthesis; isopentenyl diphosphate biosynthesis via DXP pathway; isopentenyl diphosphate from 1-deoxy-D-xylulose 5-phosphate: step 1/6. In terms of biological role, catalyzes the NADPH-dependent rearrangement and reduction of 1-deoxy-D-xylulose-5-phosphate (DXP) to 2-C-methyl-D-erythritol 4-phosphate (MEP). The protein is 1-deoxy-D-xylulose 5-phosphate reductoisomerase of Chlorobium phaeobacteroides (strain BS1).